Consider the following 143-residue polypeptide: Large ribosomal subunit protein uL11 (143 aa).

This sequence belongs to the universal ribosomal protein uL11 family. Part of the ribosomal stalk of the 50S ribosomal subunit. Interacts with L10 and the large rRNA to form the base of the stalk. L10 forms an elongated spine to which L12 dimers bind in a sequential fashion forming a multimeric L10(L12)X complex. Post-translationally, one or more lysine residues are methylated.

Its function is as follows. Forms part of the ribosomal stalk which helps the ribosome interact with GTP-bound translation factors. The sequence is that of Large ribosomal subunit protein uL11 from Delftia acidovorans (strain DSM 14801 / SPH-1).